The following is a 406-amino-acid chain: Argininosuccinate synthase (406 aa).

ATP is bound by residues 11–19 and Ala38; that span reads AYSGGLDTS. Tyr91 and Ser96 together coordinate L-citrulline. An ATP-binding site is contributed by Gly121. The L-aspartate site is built by Thr123, Asn127, and Asp128. Asn127 contacts L-citrulline. L-citrulline is bound by residues Arg131, Ser181, Ser190, Glu266, and Tyr278.

It belongs to the argininosuccinate synthase family. Type 1 subfamily. As to quaternary structure, homotetramer.

The protein resides in the cytoplasm. It carries out the reaction L-citrulline + L-aspartate + ATP = 2-(N(omega)-L-arginino)succinate + AMP + diphosphate + H(+). It participates in amino-acid biosynthesis; L-arginine biosynthesis; L-arginine from L-ornithine and carbamoyl phosphate: step 2/3. In Campylobacter jejuni subsp. jejuni serotype O:23/36 (strain 81-176), this protein is Argininosuccinate synthase.